Here is a 248-residue protein sequence, read N- to C-terminus: Acyl-coenzyme A thioesterase THEM5 (248 aa).

The active-site Proton donor/acceptor is the D167.

The protein belongs to the THEM4/THEM5 thioesterase family. Homodimer.

It is found in the mitochondrion matrix. It carries out the reaction hexadecanoyl-CoA + H2O = hexadecanoate + CoA + H(+). It catalyses the reaction (9Z,12Z)-octadecadienoyl-CoA + H2O = (9Z,12Z)-octadecadienoate + CoA + H(+). The catalysed reaction is tetradecanoyl-CoA + H2O = tetradecanoate + CoA + H(+). The enzyme catalyses (9Z)-octadecenoyl-CoA + H2O = (9Z)-octadecenoate + CoA + H(+). It carries out the reaction (9Z)-hexadecenoyl-CoA + H2O = (9Z)-hexadecenoate + CoA + H(+). It catalyses the reaction (5Z,8Z,11Z,14Z)-eicosatetraenoyl-CoA + H2O = (5Z,8Z,11Z,14Z)-eicosatetraenoate + CoA + H(+). The catalysed reaction is octadecanoyl-CoA + H2O = octadecanoate + CoA + H(+). Functionally, has acyl-CoA thioesterase activity towards long-chain (C16 and C18) fatty acyl-CoA substrates, with a preference for linoleoyl-CoA and other unsaturated long-chain fatty acid-CoA esters. Plays an important role in mitochondrial fatty acid metabolism, and in remodeling of the mitochondrial lipid cardiolipin. Required for normal mitochondrial function. The polypeptide is Acyl-coenzyme A thioesterase THEM5 (Them5) (Mus musculus (Mouse)).